The following is a 614-amino-acid chain: Syringomycin synthase SyrB1 (614 aa).

The Carrier domain maps to 535–610; the sequence is KGLSEQEHFV…VLADHITRSL (76 aa). The residue at position 570 (S570) is an O-(pantetheine 4'-phosphoryl)serine.

Belongs to the ATP-dependent AMP-binding enzyme family. The cofactor is pantetheine 4'-phosphate.

The enzyme catalyses holo-[peptidyl-carrier protein] + L-threonine + ATP = L-threonyl-[peptidyl-carrier protein] + AMP + diphosphate. Functionally, involved in the biosynthesis of syringomycin E, a cyclic lipodepsinonapeptide toxin with phytotoxic activity. Specifically adenylates L-threonine and loads it onto its peptidyl carrier domain, via a thioester linkage to the phosphopanthetheine moiety. Is highly specific for L-threonine. The chain is Syringomycin synthase SyrB1 from Pseudomonas syringae pv. syringae.